Reading from the N-terminus, the 369-residue chain is UDP-3-O-acylglucosamine N-acyltransferase (369 aa).

The active-site Proton acceptor is the histidine 263.

The protein belongs to the transferase hexapeptide repeat family. LpxD subfamily. As to quaternary structure, homotrimer.

It catalyses the reaction a UDP-3-O-[(3R)-3-hydroxyacyl]-alpha-D-glucosamine + a (3R)-hydroxyacyl-[ACP] = a UDP-2-N,3-O-bis[(3R)-3-hydroxyacyl]-alpha-D-glucosamine + holo-[ACP] + H(+). It participates in bacterial outer membrane biogenesis; LPS lipid A biosynthesis. Its function is as follows. Catalyzes the N-acylation of UDP-3-O-acylglucosamine using 3-hydroxyacyl-ACP as the acyl donor. Is involved in the biosynthesis of lipid A, a phosphorylated glycolipid that anchors the lipopolysaccharide to the outer membrane of the cell. This chain is UDP-3-O-acylglucosamine N-acyltransferase, found in Burkholderia vietnamiensis (strain G4 / LMG 22486) (Burkholderia cepacia (strain R1808)).